The chain runs to 409 residues: Threonine dehydratase-like protein AKTS1-1 (409 aa).

Positions 1 to 21 (MADYLRQVMPENDSDSEALPR) are disordered. K111 is modified (N6-(pyridoxal phosphate)lysine). Residues N138, 239–243 (GEGSL), and S368 contribute to the pyridoxal 5'-phosphate site.

It belongs to the serine/threonine dehydratase family. Pyridoxal 5'-phosphate is required as a cofactor.

It participates in mycotoxin biosynthesis. In terms of biological role, threonine dehydratase-like protein; part of the gene clusters that mediate the biosynthesis of the host-selective toxins (HSTs) AK-toxins responsible for Japanese pear black spot disease by the Japanese pear pathotype. AK-toxins are esters of 9,10-epoxy 8-hydroxy 9-methyldecatrienoic acid (EDA). On cellular level, AK-toxins affect plasma membrane of susceptible cells and cause a sudden increase in loss of K(+) after a few minutes of toxin treatment. The acyl-CoA ligase AKT1, the hydrolase AKT2 and enoyl-CoA hydratase AKT3 are all involved in the biosynthesis of the AK-, AF- and ACT-toxin common 9,10-epoxy-8-hydroxy-9-methyl-decatrienoic acid (EDA) structural moiety. Part of the EDA biosynthesis occurs in the peroxisome since these 3 enzymes are localized in peroxisomes. The exact roles of the 3 enzymes, as well as of additional AK-toxin clusters enzymes, including AKT4, AKT6 and AKTS1, have still to be elucidated. The Cytochrome P450 monooxygenase AKT7 on the other side functions to limit production of EDA and AK-toxin, probably via the catalysis of a side reaction of EDA or its precursor. This is Threonine dehydratase-like protein AKTS1-1 from Alternaria alternata (Alternaria rot fungus).